The primary structure comprises 200 residues: Phosphoheptose isomerase (200 aa).

Residues 37–199 enclose the SIS domain; the sequence is VLGCITAGGK…DVQLLGEQDL (163 aa). 52–54 contributes to the substrate binding site; it reads NGG. 2 residues coordinate Zn(2+): His-61 and Glu-65. Residues Glu-65, 94-95, 120-122, Ser-125, and Gln-175 contribute to the substrate site; these read ND and TTS. Residues Gln-175 and His-183 each contribute to the Zn(2+) site.

This sequence belongs to the SIS family. GmhA subfamily. Homotetramer. It depends on Zn(2+) as a cofactor.

The protein resides in the cytoplasm. The enzyme catalyses 2 D-sedoheptulose 7-phosphate = D-glycero-alpha-D-manno-heptose 7-phosphate + D-glycero-beta-D-manno-heptose 7-phosphate. It participates in carbohydrate biosynthesis; D-glycero-D-manno-heptose 7-phosphate biosynthesis; D-glycero-alpha-D-manno-heptose 7-phosphate and D-glycero-beta-D-manno-heptose 7-phosphate from sedoheptulose 7-phosphate: step 1/1. Catalyzes the isomerization of sedoheptulose 7-phosphate in D-glycero-D-manno-heptose 7-phosphate. The sequence is that of Phosphoheptose isomerase from Methylibium petroleiphilum (strain ATCC BAA-1232 / LMG 22953 / PM1).